Reading from the N-terminus, the 289-residue chain is HTH-type transcriptional activator AmpR (289 aa).

In terms of domain architecture, HTH lysR-type spans 6–63 (LPLNALRVFEVAMRQGSFTKAAIELRVTQAAVSHQVARLEDLLGTALFLRTSQGLIPT). The segment at residues 23–42 (FTKAAIELRVTQAAVSHQVA) is a DNA-binding region (H-T-H motif).

Belongs to the LysR transcriptional regulatory family.

It localises to the cytoplasm. This protein is a positive regulator of gene expression of cephalosporinase (AmpC). The protein is HTH-type transcriptional activator AmpR (ampR) of Rhodobacter capsulatus (Rhodopseudomonas capsulata).